The sequence spans 105 residues: Large ribosomal subunit protein eL30 (105 aa).

Glycyl lysine isopeptide (Lys-Gly) (interchain with G-Cter in ubiquitin) cross-links involve residues Lys-22, Lys-53, and Lys-83.

Belongs to the eukaryotic ribosomal protein eL30 family. In terms of assembly, component of the large ribosomal subunit (LSU). Mature yeast ribosomes consist of a small (40S) and a large (60S) subunit. The 40S small subunit contains 1 molecule of ribosomal RNA (18S rRNA) and 33 different proteins (encoded by 57 genes). The large 60S subunit contains 3 rRNA molecules (25S, 5.8S and 5S rRNA) and 46 different proteins (encoded by 81 genes).

It is found in the cytoplasm. Component of the ribosome, a large ribonucleoprotein complex responsible for the synthesis of proteins in the cell. The small ribosomal subunit (SSU) binds messenger RNAs (mRNAs) and translates the encoded message by selecting cognate aminoacyl-transfer RNA (tRNA) molecules. The large subunit (LSU) contains the ribosomal catalytic site termed the peptidyl transferase center (PTC), which catalyzes the formation of peptide bonds, thereby polymerizing the amino acids delivered by tRNAs into a polypeptide chain. The nascent polypeptides leave the ribosome through a tunnel in the LSU and interact with protein factors that function in enzymatic processing, targeting, and the membrane insertion of nascent chains at the exit of the ribosomal tunnel. The protein is Large ribosomal subunit protein eL30 of Saccharomyces cerevisiae (strain ATCC 204508 / S288c) (Baker's yeast).